The primary structure comprises 528 residues: ATP synthase F(1) complex catalytic subunit beta, mitochondrial (528 aa).

The N-terminal 46 residues, 1 to 46, are a transit peptide targeting the mitochondrion; it reads MLGLVGRVVAASASGALRGLSPSAPLPQAQLLLRAAPAALQPARDY. A glycan (O-linked (GlcNAc) serine) is linked at S106. Residues K124 and K161 each carry the N6-acetyllysine; alternate modification. N6-succinyllysine; alternate is present on residues K124 and K161. N6-acetyllysine is present on K198. 6 residues coordinate ADP: G209, V210, G211, K212, T213, and V214. G209 lines the ATP pocket. Residues G209, V210, G211, K212, and T213 each contribute to the phosphate site. ATP is bound by residues G211, K212, T213, and V214. Mg(2+) is bound at residue T213. E238 lines the Mg(2+) pocket. An ATP-binding site is contributed by R239. 2 positions are modified to N6-acetyllysine; alternate: K259 and K264. K259 and K264 each carry N6-succinyllysine; alternate. At T312 the chain carries Phosphothreonine. S415 bears the Phosphoserine mark. The residue at position 426 (K426) is an N6-acetyllysine. S433 carries the phosphoserine modification. 2 positions are modified to N6-acetyllysine: K480 and K485. The residue at position 522 (K522) is an N6-acetyllysine; alternate. K522 bears the N6-succinyllysine; alternate mark.

This sequence belongs to the ATPase alpha/beta chains family. In terms of assembly, homotrimer. Component of the ATP synthase complex composed at least of ATP5F1A/subunit alpha, ATP5F1B/subunit beta, ATP5MC1/subunit c (homooctomer), MT-ATP6/subunit a, MT-ATP8/subunit 8, ATP5ME/subunit e, ATP5MF/subunit f, ATP5MG/subunit g, ATP5MK/subunit k, ATP5MJ/subunit j, ATP5F1C/subunit gamma, ATP5F1D/subunit delta, ATP5F1E/subunit epsilon, ATP5PF/subunit F6, ATP5PB/subunit b, ATP5PD/subunit d, ATP5PO/subunit OSCP. ATP synthase complex consists of a soluble F(1) head domain (subunits alpha(3) and beta(3)) - the catalytic core - and a membrane F(0) domain - the membrane proton channel (subunits c, a, 8, e, f, g, k and j). These two domains are linked by a central stalk (subunits gamma, delta, and epsilon) rotating inside the F1 region and a stationary peripheral stalk (subunits F6, b, d, and OSCP). Interacts with PPIF. Interacts with BCL2L1 isoform BCL-X(L); the interaction mediates the association of BCL2L1 isoform BCL-X(L) with the mitochondrial membrane F(1)F(0) ATP synthase and enhances neurons metabolic efficiency. Interacts with CLN5 and PPT1. Interacts with S100A1; this interaction increases F1-ATPase activity. Interacts with MTLN. Interacts with TTC5/STRAP; the interaction results in decreased mitochondrial ATP production.

The protein resides in the mitochondrion inner membrane. It catalyses the reaction ATP + H2O + 4 H(+)(in) = ADP + phosphate + 5 H(+)(out). Functionally, catalytic subunit beta, of the mitochondrial membrane ATP synthase complex (F(1)F(0) ATP synthase or Complex V) that produces ATP from ADP in the presence of a proton gradient across the membrane which is generated by electron transport complexes of the respiratory chain. ATP synthase complex consist of a soluble F(1) head domain - the catalytic core - and a membrane F(1) domain - the membrane proton channel. These two domains are linked by a central stalk rotating inside the F(1) region and a stationary peripheral stalk. During catalysis, ATP synthesis in the catalytic domain of F(1) is coupled via a rotary mechanism of the central stalk subunits to proton translocation. In vivo, can only synthesize ATP although its ATP hydrolase activity can be activated artificially in vitro. With the subunit alpha (ATP5F1A), forms the catalytic core in the F(1) domain. This is ATP synthase F(1) complex catalytic subunit beta, mitochondrial from Bos taurus (Bovine).